A 443-amino-acid polypeptide reads, in one-letter code: Na(+)-translocating NADH-quinone reductase subunit A (443 aa).

This sequence belongs to the NqrA family. In terms of assembly, composed of six subunits; NqrA, NqrB, NqrC, NqrD, NqrE and NqrF.

The enzyme catalyses a ubiquinone + n Na(+)(in) + NADH + H(+) = a ubiquinol + n Na(+)(out) + NAD(+). Its function is as follows. NQR complex catalyzes the reduction of ubiquinone-1 to ubiquinol by two successive reactions, coupled with the transport of Na(+) ions from the cytoplasm to the periplasm. NqrA to NqrE are probably involved in the second step, the conversion of ubisemiquinone to ubiquinol. This Actinobacillus succinogenes (strain ATCC 55618 / DSM 22257 / CCUG 43843 / 130Z) protein is Na(+)-translocating NADH-quinone reductase subunit A.